The chain runs to 425 residues: Serine--tRNA ligase (425 aa).

233-235 serves as a coordination point for L-serine; the sequence is TAE. 264–266 contacts ATP; it reads RRE. L-serine is bound at residue Glu-287. Residue 351–354 coordinates ATP; sequence EISS. An L-serine-binding site is contributed by Ser-385.

This sequence belongs to the class-II aminoacyl-tRNA synthetase family. Type-1 seryl-tRNA synthetase subfamily. In terms of assembly, homodimer. The tRNA molecule binds across the dimer.

The protein resides in the cytoplasm. It carries out the reaction tRNA(Ser) + L-serine + ATP = L-seryl-tRNA(Ser) + AMP + diphosphate + H(+). It catalyses the reaction tRNA(Sec) + L-serine + ATP = L-seryl-tRNA(Sec) + AMP + diphosphate + H(+). It participates in aminoacyl-tRNA biosynthesis; selenocysteinyl-tRNA(Sec) biosynthesis; L-seryl-tRNA(Sec) from L-serine and tRNA(Sec): step 1/1. Its function is as follows. Catalyzes the attachment of serine to tRNA(Ser). Is also able to aminoacylate tRNA(Sec) with serine, to form the misacylated tRNA L-seryl-tRNA(Sec), which will be further converted into selenocysteinyl-tRNA(Sec). The protein is Serine--tRNA ligase of Prochlorococcus marinus (strain AS9601).